Consider the following 279-residue polypeptide: Ultraviolet N-glycosylase/AP lyase (279 aa).

A HhH domain is found at 123-142 (LEDLVALPGVGRKTAFVVLG). Positions 203, 210, 213, and 219 each coordinate [4Fe-4S] cluster. The tract at residues 256–279 (TAGAAGPRPRAGGXAPGLPAQPFR) is disordered.

Belongs to the Nth/MutY family. [4Fe-4S] cluster is required as a cofactor.

DNA repair enzyme that has both DNA N-glycosylase activity and AP-lyase activity. Initiates repair at cis-syn pyrimidine dimers. Proceeds via an imino enzyme:DNA intermediate. This chain is Ultraviolet N-glycosylase/AP lyase (pdg), found in Micrococcus luteus (strain ATCC 4698 / DSM 20030 / JCM 1464 / CCM 169 / CCUG 5858 / IAM 1056 / NBRC 3333 / NCIMB 9278 / NCTC 2665 / VKM Ac-2230) (Micrococcus lysodeikticus).